Reading from the N-terminus, the 335-residue chain is Holliday junction branch migration complex subunit RuvB (335 aa).

The segment at 4–184 (ADRLIQPTAL…FGIVQRLEFY (181 aa)) is large ATPase domain (RuvB-L). ATP-binding positions include Ile-23, Arg-24, Gly-65, Lys-68, Thr-69, Thr-70, 131–133 (EDY), Arg-174, Tyr-184, and Arg-221. Thr-69 is a binding site for Mg(2+). The segment at 185-255 (NIKDLTQIVK…VASAALDMLD (71 aa)) is small ATPAse domain (RuvB-S). The head domain (RuvB-H) stretch occupies residues 258-335 (KEGFDYMDRK…LHFGYDYEPN (78 aa)). Residues Arg-294, Arg-313, and Arg-318 each coordinate DNA.

The protein belongs to the RuvB family. As to quaternary structure, homohexamer. Forms an RuvA(8)-RuvB(12)-Holliday junction (HJ) complex. HJ DNA is sandwiched between 2 RuvA tetramers; dsDNA enters through RuvA and exits via RuvB. An RuvB hexamer assembles on each DNA strand where it exits the tetramer. Each RuvB hexamer is contacted by two RuvA subunits (via domain III) on 2 adjacent RuvB subunits; this complex drives branch migration. In the full resolvosome a probable DNA-RuvA(4)-RuvB(12)-RuvC(2) complex forms which resolves the HJ.

The protein resides in the cytoplasm. It catalyses the reaction ATP + H2O = ADP + phosphate + H(+). Its function is as follows. The RuvA-RuvB-RuvC complex processes Holliday junction (HJ) DNA during genetic recombination and DNA repair, while the RuvA-RuvB complex plays an important role in the rescue of blocked DNA replication forks via replication fork reversal (RFR). RuvA specifically binds to HJ cruciform DNA, conferring on it an open structure. The RuvB hexamer acts as an ATP-dependent pump, pulling dsDNA into and through the RuvAB complex. RuvB forms 2 homohexamers on either side of HJ DNA bound by 1 or 2 RuvA tetramers; 4 subunits per hexamer contact DNA at a time. Coordinated motions by a converter formed by DNA-disengaged RuvB subunits stimulates ATP hydrolysis and nucleotide exchange. Immobilization of the converter enables RuvB to convert the ATP-contained energy into a lever motion, pulling 2 nucleotides of DNA out of the RuvA tetramer per ATP hydrolyzed, thus driving DNA branch migration. The RuvB motors rotate together with the DNA substrate, which together with the progressing nucleotide cycle form the mechanistic basis for DNA recombination by continuous HJ branch migration. Branch migration allows RuvC to scan DNA until it finds its consensus sequence, where it cleaves and resolves cruciform DNA. This is Holliday junction branch migration complex subunit RuvB from Pseudoalteromonas atlantica (strain T6c / ATCC BAA-1087).